We begin with the raw amino-acid sequence, 100 residues long: Small ribosomal subunit protein uS14 (100 aa).

Belongs to the universal ribosomal protein uS14 family. As to quaternary structure, part of the 30S ribosomal subunit. Contacts proteins S3 and S10.

Its function is as follows. Binds 16S rRNA, required for the assembly of 30S particles and may also be responsible for determining the conformation of the 16S rRNA at the A site. This is Small ribosomal subunit protein uS14 from Synechocystis sp. (strain ATCC 27184 / PCC 6803 / Kazusa).